Consider the following 209-residue polypeptide: Thymidylate kinase (209 aa).

10 to 17 is a binding site for ATP; sequence GIDGCGKT.

The protein belongs to the thymidylate kinase family.

It carries out the reaction dTMP + ATP = dTDP + ADP. Its function is as follows. Phosphorylation of dTMP to form dTDP in both de novo and salvage pathways of dTTP synthesis. The chain is Thymidylate kinase from Synechococcus sp. (strain CC9605).